Reading from the N-terminus, the 322-residue chain is Putative integrase ORF3 (322 aa).

Residues 153–322 enclose the Integrase catalytic domain; sequence RGKLTDFKSI…SSKEMFLQNI (170 aa).

It belongs to the plectrovirus integrase ORF3 family.

Its function is as follows. This protein may encode an integrase, which is necessary for integration of the viral DNA into host genome. The protein is Putative integrase ORF3 of Spiroplasma virus SpV1-R8A2 B (SpV1).